Consider the following 332-residue polypeptide: tRNA dimethylallyltransferase (332 aa).

14–21 serves as a coordination point for ATP; that stretch reads GPTASGKT. 16-21 is a substrate binding site; sequence TASGKT. The segment at 39 to 42 is interaction with substrate tRNA; the sequence is DSMQ. The segment at 312–332 is disordered; that stretch reads NKRSSNHDCKRKHPRPSTREL. The span at 320–332 shows a compositional bias: basic residues; the sequence is CKRKHPRPSTREL.

The protein belongs to the IPP transferase family. In terms of assembly, monomer. Requires Mg(2+) as cofactor.

It carries out the reaction adenosine(37) in tRNA + dimethylallyl diphosphate = N(6)-dimethylallyladenosine(37) in tRNA + diphosphate. Catalyzes the transfer of a dimethylallyl group onto the adenine at position 37 in tRNAs that read codons beginning with uridine, leading to the formation of N6-(dimethylallyl)adenosine (i(6)A). The polypeptide is tRNA dimethylallyltransferase (Staphylococcus epidermidis (strain ATCC 35984 / DSM 28319 / BCRC 17069 / CCUG 31568 / BM 3577 / RP62A)).